Consider the following 443-residue polypeptide: MYGGDEVSAIVIDVGSYSCKAGYAGDDTPKAVFPSVVGSIEQTGETDEAKADKEAEAASDSKNGAKPMDVDKAKTKRKLYVGQELEFRRDHMEVISPMKDGTVTDWDIVDNIWNHAFRQRLLINPEEHPMLIAEPSTNTGQQREKAAELMFEKYKVPALFLAKNAVLTSFASGRATSLVVDSGGGSTVVAAVHDGYVLQKSVATSPIGGEFLTDCMMKSLESKGVVIRPRYSFKKKEVGPGEYKVVDLDLPNTTESYKLYCMRAIASDIKESVCRVPDTAFDEVAYANVPTTSYELPDGQTIEVGADRFKIPDILFNPSLSQTIPGVDGFADSMSVRGLPRMVIDSVNRCDVDIRKELLSSILLSGGSSSILQLKERLEKEVLEESSGNTRVKVLASGNSVERRFSVWIGGSILASLGSFQQMWFSKAEYEEHGVSYIQRKCP.

The interval 36–69 is disordered; that stretch reads VVGSIEQTGETDEAKADKEAEAASDSKNGAKPMD. Positions 47 to 56 are enriched in basic and acidic residues; it reads DEAKADKEAE.

This sequence belongs to the actin family. ARP4 subfamily.

It is found in the nucleus. It localises to the cytoplasm. Its function is as follows. Involved in several developmental processes including organization of plant organs, flowering time, anther development, flower senescence and fertility, probably by regulating the chromatin structure. The chain is Actin-related protein 4 (ARP4) from Oryza sativa subsp. indica (Rice).